Reading from the N-terminus, the 216-residue chain is MEKFTVHTGVVAPLDRENVDTDAIIPKQFLKSIKRTGFGPNAFDEWRYLDHGEPGQDNSKRPLNPDFVLNQPRYQGASVLLARKNFGCGSSREHAPWALQQYGFRAIIAPSFADIFFNNCYKNGLLPIVLTEQQVDHLFNDTYAFNGYQLTVDLDAQVVRTGDGREYPFEIAAFRKYCLLNGFDDIGLTLRHADKIRQFEAERLAKQPWLNNKLVG.

This sequence belongs to the LeuD family. LeuD type 1 subfamily. Heterodimer of LeuC and LeuD.

It catalyses the reaction (2R,3S)-3-isopropylmalate = (2S)-2-isopropylmalate. It participates in amino-acid biosynthesis; L-leucine biosynthesis; L-leucine from 3-methyl-2-oxobutanoate: step 2/4. In terms of biological role, catalyzes the isomerization between 2-isopropylmalate and 3-isopropylmalate, via the formation of 2-isopropylmaleate. The protein is 3-isopropylmalate dehydratase small subunit of Burkholderia ambifaria (strain MC40-6).